The sequence spans 449 residues: Tryptophan--tRNA ligase (449 aa).

ATP-binding positions include 10–12 and 18–19; these read TTT and GN. The 'HIGH' region motif lies at 11-19; that stretch reads TTGTPHLGN. Asp-143 serves as a coordination point for L-tryptophan. Residues 155–157, Leu-197, and 204–208 contribute to the ATP site; these read GRD and KMSKS. The 'KMSKS' region signature appears at 204-208; sequence KMSKS.

It belongs to the class-I aminoacyl-tRNA synthetase family. As to quaternary structure, homodimer.

The protein localises to the cytoplasm. It catalyses the reaction tRNA(Trp) + L-tryptophan + ATP = L-tryptophyl-tRNA(Trp) + AMP + diphosphate + H(+). Catalyzes the attachment of tryptophan to tRNA(Trp). This chain is Tryptophan--tRNA ligase, found in Pseudomonas syringae pv. tomato (strain ATCC BAA-871 / DC3000).